A 742-amino-acid polypeptide reads, in one-letter code: Eukaryotic translation initiation factor 3 subunit B (742 aa).

The span at 1 to 10 shows a compositional bias: polar residues; it reads MAPSFDTLSE. Residues 1-20 form a disordered region; it reads MAPSFDTLSEQDLHEEEEEE. An RRM domain is found at 40–126; that stretch reads TFVVIDGLPI…HTLAVNKLMD (87 aa). 5 WD repeats span residues 193 to 230, 232 to 290, 304 to 345, 515 to 558, and 573 to 611; these read AHWT…KLKQ, PHPF…RSFV, QPKK…LLGK, IEKK…EKPE, and VEHY…HTFA.

It belongs to the eIF-3 subunit B family. In terms of assembly, component of the eukaryotic translation initiation factor 3 (eIF-3) complex.

It is found in the cytoplasm. Functionally, RNA-binding component of the eukaryotic translation initiation factor 3 (eIF-3) complex, which is involved in protein synthesis of a specialized repertoire of mRNAs and, together with other initiation factors, stimulates binding of mRNA and methionyl-tRNAi to the 40S ribosome. The eIF-3 complex specifically targets and initiates translation of a subset of mRNAs involved in cell proliferation. The sequence is that of Eukaryotic translation initiation factor 3 subunit B (prt1) from Aspergillus terreus (strain NIH 2624 / FGSC A1156).